Reading from the N-terminus, the 308-residue chain is Phosphoribosylaminoimidazole-succinocarboxamide synthase (308 aa).

The protein belongs to the SAICAR synthetase family.

It carries out the reaction 5-amino-1-(5-phospho-D-ribosyl)imidazole-4-carboxylate + L-aspartate + ATP = (2S)-2-[5-amino-1-(5-phospho-beta-D-ribosyl)imidazole-4-carboxamido]succinate + ADP + phosphate + 2 H(+). The protein operates within purine metabolism; IMP biosynthesis via de novo pathway; 5-amino-1-(5-phospho-D-ribosyl)imidazole-4-carboxamide from 5-amino-1-(5-phospho-D-ribosyl)imidazole-4-carboxylate: step 1/2. This Xanthomonas oryzae pv. oryzae (strain PXO99A) protein is Phosphoribosylaminoimidazole-succinocarboxamide synthase.